A 444-amino-acid chain; its full sequence is MNAVQIDQLKQQFPLIETLQAYQETFWFNPHRYPLNEALAKVCLTEQDVKEAEARLARFAPYLAKVFPETQAQHGKIESALVEIAEMQQALSLQKHKTLTGKLWLKKDSHLPISGSIKARGGIYEVLAHAEKLAIEAGLLKLEDDYSKLDQDSFRTFFSKYQIAVGSTGNLGLSIGIMSAKLGFRVSVHMSADARQWKKDKLRSLGVNVVEYASDYGVAVEEGRKAAEQDPFCFFIDDENSTTLFLGYAVAGLRLKQQFEQKQIKVDADHPLFVYLPCGVGGGPGGVSFGLKLAFGEHVHCIFAEPTHSPCMLLGVYTGLHDQISVNDIGLDNITAADGLAVGRASGFVGRAMQQLIDGYYTIHDECLYELIALLNQTENIQVEPSAAAGMMGPYYVQTTPDYLALHQLSAEKLQHATHVVWATGGGMVPPDEMQKYLTYSQRN.

K118 is modified (N6-(pyridoxal phosphate)lysine).

It belongs to the serine/threonine dehydratase family. DsdA subfamily. Requires pyridoxal 5'-phosphate as cofactor.

The enzyme catalyses D-serine = pyruvate + NH4(+). The chain is Probable D-serine dehydratase from Acinetobacter baumannii (strain ACICU).